Here is a 99-residue protein sequence, read N- to C-terminus: Small ribosomal subunit protein eS24 (99 aa).

It belongs to the eukaryotic ribosomal protein eS24 family. May be present in 2 copies per 70S ribosome. Part of the 30S ribosomal subunit, where it binds 16S rRNA at its canonical site at the bse of the body, as well as a possible second 50S binding site near 23S rRNA helix 45.

This Pyrococcus furiosus (strain ATCC 43587 / DSM 3638 / JCM 8422 / Vc1) protein is Small ribosomal subunit protein eS24.